A 420-amino-acid polypeptide reads, in one-letter code: Putative phosphate permease HI_1604 (420 aa).

12 consecutive transmembrane segments (helical) span residues 8–28, 49–69, 88–108, 112–132, 145–165, 185–205, 216–236, 250–270, 300–320, 343–363, 370–390, and 393–413; these read GSWL…GIGA, AIII…GEVT, ILAL…FIAT, WPVS…CITI, IVGS…AIFA, GPYY…KKGL, ETLI…HFYF, FGAV…AMAF, GGAL…VGLI, FAAQ…GLPI, VGAI…LTVI, and IISS…IIFY.

Belongs to the inorganic phosphate transporter (PiT) (TC 2.A.20) family.

It localises to the cell inner membrane. Potential transporter for phosphate. The polypeptide is Putative phosphate permease HI_1604 (Haemophilus influenzae (strain ATCC 51907 / DSM 11121 / KW20 / Rd)).